A 388-amino-acid polypeptide reads, in one-letter code: Formate-dependent phosphoribosylglycinamide formyltransferase (388 aa).

N(1)-(5-phospho-beta-D-ribosyl)glycinamide-binding positions include 20–21 and E80; that span reads EL. ATP is bound by residues R112, K153, 158–163, 193–196, and E201; these read SSGKGQ and EEFI. The region spanning 117 to 306 is the ATP-grasp domain; the sequence is RLAFEKLGLR…EFEIHARAIL (190 aa). 2 residues coordinate Mg(2+): E265 and E277. Residues D284, K352, and 359–360 each bind N(1)-(5-phospho-beta-D-ribosyl)glycinamide; that span reads RR.

It belongs to the PurK/PurT family. As to quaternary structure, homodimer.

The catalysed reaction is N(1)-(5-phospho-beta-D-ribosyl)glycinamide + formate + ATP = N(2)-formyl-N(1)-(5-phospho-beta-D-ribosyl)glycinamide + ADP + phosphate + H(+). The protein operates within purine metabolism; IMP biosynthesis via de novo pathway; N(2)-formyl-N(1)-(5-phospho-D-ribosyl)glycinamide from N(1)-(5-phospho-D-ribosyl)glycinamide (formate route): step 1/1. Its function is as follows. Involved in the de novo purine biosynthesis. Catalyzes the transfer of formate to 5-phospho-ribosyl-glycinamide (GAR), producing 5-phospho-ribosyl-N-formylglycinamide (FGAR). Formate is provided by PurU via hydrolysis of 10-formyl-tetrahydrofolate. The polypeptide is Formate-dependent phosphoribosylglycinamide formyltransferase (Methanococcus maripaludis (strain C5 / ATCC BAA-1333)).